A 436-amino-acid chain; its full sequence is Adenylosuccinate synthetase (436 aa).

Residues 12 to 18 and 40 to 42 contribute to the GTP site; these read GDEGKGK and GHT. D13 acts as the Proton acceptor in catalysis. 2 residues coordinate Mg(2+): D13 and G40. IMP-binding positions include 13–16, 38–41, T130, R144, Q230, T245, and R309; these read DEGK and NAGH. H41 functions as the Proton donor in the catalytic mechanism. Residue 305–311 coordinates substrate; that stretch reads TTTGRPR. Residues R311, 337–339, and 419–421 contribute to the GTP site; these read KLD and SVG.

This sequence belongs to the adenylosuccinate synthetase family. In terms of assembly, homodimer. Requires Mg(2+) as cofactor.

It is found in the cytoplasm. The enzyme catalyses IMP + L-aspartate + GTP = N(6)-(1,2-dicarboxyethyl)-AMP + GDP + phosphate + 2 H(+). It functions in the pathway purine metabolism; AMP biosynthesis via de novo pathway; AMP from IMP: step 1/2. Plays an important role in the de novo pathway of purine nucleotide biosynthesis. Catalyzes the first committed step in the biosynthesis of AMP from IMP. The polypeptide is Adenylosuccinate synthetase (Myxococcus xanthus (strain DK1622)).